The following is a 120-amino-acid chain: Large ribosomal subunit protein uL18 (120 aa).

The protein belongs to the universal ribosomal protein uL18 family. Part of the 50S ribosomal subunit; part of the 5S rRNA/L5/L18/L25 subcomplex. Contacts the 5S and 23S rRNAs.

In terms of biological role, this is one of the proteins that bind and probably mediate the attachment of the 5S RNA into the large ribosomal subunit, where it forms part of the central protuberance. The sequence is that of Large ribosomal subunit protein uL18 from Rhizobium rhizogenes (strain K84 / ATCC BAA-868) (Agrobacterium radiobacter).